The primary structure comprises 141 residues: Large ribosomal subunit protein uL11 (141 aa).

Belongs to the universal ribosomal protein uL11 family. Part of the ribosomal stalk of the 50S ribosomal subunit. Interacts with L10 and the large rRNA to form the base of the stalk. L10 forms an elongated spine to which L12 dimers bind in a sequential fashion forming a multimeric L10(L12)X complex. One or more lysine residues are methylated.

In terms of biological role, forms part of the ribosomal stalk which helps the ribosome interact with GTP-bound translation factors. The sequence is that of Large ribosomal subunit protein uL11 from Ruminiclostridium cellulolyticum (strain ATCC 35319 / DSM 5812 / JCM 6584 / H10) (Clostridium cellulolyticum).